Consider the following 97-residue polypeptide: Protein RnfH (97 aa).

The protein belongs to the UPF0125 (RnfH) family.

This Aliivibrio salmonicida (strain LFI1238) (Vibrio salmonicida (strain LFI1238)) protein is Protein RnfH.